The primary structure comprises 320 residues: Malate dehydrogenase (320 aa).

NAD(+)-binding positions include 10-15 and D34; that span reads GSGMIG. The substrate site is built by R83 and R89. NAD(+)-binding positions include N96 and 119–121; that span reads ITN. Residues N121 and R152 each contribute to the substrate site. The Proton acceptor role is filled by H176.

It belongs to the LDH/MDH superfamily. MDH type 3 family.

It catalyses the reaction (S)-malate + NAD(+) = oxaloacetate + NADH + H(+). Catalyzes the reversible oxidation of malate to oxaloacetate. The polypeptide is Malate dehydrogenase (Agrobacterium fabrum (strain C58 / ATCC 33970) (Agrobacterium tumefaciens (strain C58))).